Here is a 190-residue protein sequence, read N- to C-terminus: ATP-dependent Clp protease proteolytic subunit 2 (190 aa).

The Nucleophile role is filled by S98. H123 is a catalytic residue.

It belongs to the peptidase S14 family. In terms of assembly, fourteen ClpP subunits assemble into 2 heptameric rings which stack back to back to give a disk-like structure with a central cavity, resembling the structure of eukaryotic proteasomes.

The protein localises to the cytoplasm. It carries out the reaction Hydrolysis of proteins to small peptides in the presence of ATP and magnesium. alpha-casein is the usual test substrate. In the absence of ATP, only oligopeptides shorter than five residues are hydrolyzed (such as succinyl-Leu-Tyr-|-NHMec, and Leu-Tyr-Leu-|-Tyr-Trp, in which cleavage of the -Tyr-|-Leu- and -Tyr-|-Trp bonds also occurs).. Functionally, cleaves peptides in various proteins in a process that requires ATP hydrolysis. Has a chymotrypsin-like activity. Plays a major role in the degradation of misfolded proteins. This Bacillus licheniformis (strain ATCC 14580 / DSM 13 / JCM 2505 / CCUG 7422 / NBRC 12200 / NCIMB 9375 / NCTC 10341 / NRRL NRS-1264 / Gibson 46) protein is ATP-dependent Clp protease proteolytic subunit 2.